Consider the following 319-residue polypeptide: Beta-ketoacyl-[acyl-carrier-protein] synthase III (319 aa).

Active-site residues include cysteine 115 and histidine 246. The interval 247 to 251 (QANLR) is ACP-binding. Residue asparagine 276 is part of the active site.

The protein belongs to the thiolase-like superfamily. FabH family. As to quaternary structure, homodimer.

It is found in the cytoplasm. It carries out the reaction malonyl-[ACP] + acetyl-CoA + H(+) = 3-oxobutanoyl-[ACP] + CO2 + CoA. It functions in the pathway lipid metabolism; fatty acid biosynthesis. In terms of biological role, catalyzes the condensation reaction of fatty acid synthesis by the addition to an acyl acceptor of two carbons from malonyl-ACP. Catalyzes the first condensation reaction which initiates fatty acid synthesis and may therefore play a role in governing the total rate of fatty acid production. Possesses both acetoacetyl-ACP synthase and acetyl transacylase activities. Its substrate specificity determines the biosynthesis of branched-chain and/or straight-chain of fatty acids. The polypeptide is Beta-ketoacyl-[acyl-carrier-protein] synthase III (Coxiella burnetii (strain CbuK_Q154) (Coxiella burnetii (strain Q154))).